The sequence spans 252 residues: tRNA1(Val) (adenine(37)-N6)-methyltransferase (252 aa).

Belongs to the methyltransferase superfamily. tRNA (adenine-N(6)-)-methyltransferase family.

The protein resides in the cytoplasm. The enzyme catalyses adenosine(37) in tRNA1(Val) + S-adenosyl-L-methionine = N(6)-methyladenosine(37) in tRNA1(Val) + S-adenosyl-L-homocysteine + H(+). Functionally, specifically methylates the adenine in position 37 of tRNA(1)(Val) (anticodon cmo5UAC). The protein is tRNA1(Val) (adenine(37)-N6)-methyltransferase of Yersinia pseudotuberculosis serotype IB (strain PB1/+).